The following is a 716-amino-acid chain: Forkhead box protein P2 (716 aa).

A compositionally biased stretch (polar residues) spans 1 to 28 (MMQESATETISNSSMNQNGMSTLSSQLD). Disordered regions lie at residues 1–45 (MMQE…SEVS) and 286–340 (KHGG…TGAS). Residues 293-306 (TTNNSSSTTSSTTS) show a composition bias toward low complexity. Polar residues predominate over residues 316 to 325 (SIVNGQSSVL). A compositionally biased stretch (basic and acidic residues) spans 327 to 338 (ARRDSSSHEETG). The segment at 347 to 372 (GVCKWPGCESICEDFGQFLKHLNNEH) adopts a C2H2-type zinc-finger fold. The interval 389 to 410 (VQQLEIQLSKERERLQAMMTHL) is leucine-zipper. The tract at residues 423 to 427 (PLNLV) is CTBP1-binding. Over residues 439-460 (TSPQSLPQTPTTPTAPVTPITQ) the composition is skewed to low complexity. The segment at 439–466 (TSPQSLPQTPTTPTAPVTPITQGPSVIT) is disordered. Positions 505 to 595 (RPPFTYATLI…SQKITGSPTL (91 aa)) form a DNA-binding region, fork-head. Disordered regions lie at residues 650 to 669 (LDHI…QPHI) and 679 to 716 (VIAE…EDLE). Acidic residues predominate over residues 700–716 (LEDDREIEEEPLSEDLE).

Forms homodimers and heterodimers with FOXP1 and FOXP4. Dimerization is required for DNA-binding. Interacts with CTBP1. Interacts with FOXP1. Interacts with TBR1. Interacts with ZMYM2.

The protein localises to the nucleus. Transcriptional repressor that may play a role in the specification and differentiation of lung epithelium. May also play a role in developing neural, gastrointestinal and cardiovascular tissues. Can act with CTBP1 to synergistically repress transcription but CTPBP1 is not essential. Plays a role in synapse formation by regulating SRPX2 levels. The polypeptide is Forkhead box protein P2 (FOXP2) (Pan paniscus (Pygmy chimpanzee)).